Reading from the N-terminus, the 355-residue chain is Arginine kinase (355 aa).

One can recognise a Phosphagen kinase N-terminal domain in the interval lysine 8–valine 90. Glycine 63–tyrosine 67 serves as a coordination point for L-arginine. The 238-residue stretch at tyrosine 118 to methionine 355 folds into the Phosphagen kinase C-terminal domain. ATP-binding positions include serine 121 to arginine 125 and histidine 184. Residue glutamate 224 participates in L-arginine binding. Arginine 228 is an ATP binding site. Position 270 (cysteine 270) interacts with L-arginine. ATP-binding positions include arginine 279–histidine 283 and arginine 308–glutamate 313. Glutamate 313 is a binding site for L-arginine.

The protein belongs to the ATP:guanido phosphotransferase family. In terms of assembly, monomer.

The enzyme catalyses L-arginine + ATP = N(omega)-phospho-L-arginine + ADP + H(+). This Penaeus japonicus (Kuruma prawn) protein is Arginine kinase.